A 285-amino-acid polypeptide reads, in one-letter code: Ret finger protein-like 4A (285 aa).

An RING-type; degenerate zinc finger spans residues 11-53 (CYFCFRYLENPVYLNCGYICCFQCLDSLEKSPEGDGVLCPNCS). Positions 78-276 (EPQLNFILTM…ISICPVMNPS (199 aa)) constitute a B30.2/SPRY domain.

Interacts with PSMB1, UBE2A and CCNB1.

The protein resides in the cytoplasm. It is found in the nucleus. The polypeptide is Ret finger protein-like 4A (Rfpl4a) (Rattus norvegicus (Rat)).